A 386-amino-acid chain; its full sequence is 11-beta-hydroxysteroid dehydrogenase type 2 (386 aa).

82–111 is an NAD(+) binding site; that stretch reads TRAVLITGCDTGFGKETAKKLDAMGFTVLA. A substrate-binding site is contributed by serine 219. The active-site Proton acceptor is the tyrosine 232.

It belongs to the short-chain dehydrogenases/reductases (SDR) family. Interacts with ligand-free cytoplasmic NR3C2. Highly expressed in kidney. Also found in colon and small intestine. Not expressed in the adrenal gland. Expressed in uterus.

It localises to the microsome. Its subcellular location is the endoplasmic reticulum. The enzyme catalyses an 11beta-hydroxysteroid + NAD(+) = an 11-oxosteroid + NADH + H(+). It carries out the reaction corticosterone + NAD(+) = 11-dehydrocorticosterone + NADH + H(+). It catalyses the reaction 11beta,17beta-dihydroxyandrost-4-ene-3-one + NAD(+) = 17beta-hydroxyandrost-4-ene-3,11-dione + NADH + H(+). The catalysed reaction is 11beta-hydroxyandrost-4-ene-3,17-dione + NAD(+) = androst-4-ene-3,11,17-trione + NADH + H(+). Its pathway is steroid metabolism. With respect to regulation, inhibited by glycyrrhetinic acid. Induced by progesterone, through the Ihh signaling pathway. Catalyzes the conversion of biologically active 11beta-hydroxyglucocorticoids (11beta-hydroxysteroid) such as corticosterone, to inactive 11-ketoglucocorticoids (11-oxosteroid) such as 11-dehydrocorticosterone, in the presence of NAD(+). Functions as a dehydrogenase (oxidase), thereby decreasing the concentration of active glucocorticoids, thus protecting the nonselective mineralocorticoid receptor from occupation by glucocorticoids. Plays an important role in maintaining glucocorticoids balance during preimplantation and protects the fetus from excessive maternal corticosterone exposure. Catalyzes the oxidation of 11beta-hydroxytestosterone (11beta,17beta-dihydroxyandrost-4-ene-3-one) to 11-ketotestosterone (17beta-hydroxyandrost-4-ene-3,11-dione), a major bioactive androgen. Catalyzes the conversion of 11beta-hydroxyandrostenedione (11beta-hydroxyandrost-4-ene-3,17-dione) to 11-ketoandrostenedione (androst-4-ene-3,11,17-trione), which can be further metabolized to 11-ketotestosterone. Converts 7-beta-25-dihydroxycholesterol to 7-oxo-25-hydroxycholesterol in vitro. 7-beta-25-dihydroxycholesterol (not 7-oxo-25-hydroxycholesterol) acts as a ligand for the G-protein-coupled receptor (GPCR) Epstein-Barr virus-induced gene 2 (EBI2) and may thereby regulate immune cell migration. This Mus musculus (Mouse) protein is 11-beta-hydroxysteroid dehydrogenase type 2 (Hsd11b2).